Here is a 214-residue protein sequence, read N- to C-terminus: MSGMPNAELVREQQQPGDPMGSSAHPNAYVPEVGGLGSELPEAPRDKFFRKMREQPLVPIGSLLTCGALIAASNHLRSGNRDQFNKALRWRVGFQGLTVLAALVGSFYYGQQAAATIPAPASSSADAPLQQGAVTTLPGRAPTVWQQTRADERANKGRNEFEGRVGQALDRELNDDKRLEEALLGKEEEINLEQLKKTATKPRPVIGQDARRQV.

Residues 1 to 36 form a disordered region; the sequence is MSGMPNAELVREQQQPGDPMGSSAHPNAYVPEVGGL. The 92-residue stretch at 29-120 folds into the HIG1 domain; sequence YVPEVGGLGS…QQAAATIPAP (92 aa). 2 helical membrane passes run 57–73 and 88–109; these read LVPI…IAAS and LRWR…SFYY. A coiled-coil region spans residues 177–197; sequence KRLEEALLGKEEEINLEQLKK. The interval 195-214 is disordered; the sequence is LKKTATKPRPVIGQDARRQV.

It belongs to the RCF1 family. In terms of assembly, associates with the respiratory chain complex III/complex IV supercomplex.

It localises to the mitochondrion membrane. Its function is as follows. Cytochrome c oxidase subunit which plays a role in assembly of respiratory supercomplexes. The protein is Respiratory supercomplex factor 1, mitochondrial (RCF1) of Mycosarcoma maydis (Corn smut fungus).